We begin with the raw amino-acid sequence, 493 residues long: MAENLVNTFVTQVIENSDYEELDRIYLTNKVFTLVGEGVADIETDSSELIDLKDQLLQAGVKAGSVGELKEEQDIIGAQLMDLITPRPSVVNRNFWDTYKSNPEQAIADFYAQSKRNDYVKVKAIAQNIAYKAPTKYGDLEITINLSKPEKDPKAIAAAKNAVASDYPKCQLCMENEGYLGRINHPARSNHRVVRFQMEDKEWGFQYSPYAYFNEHSIFFYGKHEPMHISPLTFGRLLTIVEVFPGYFAGSNADLPIVGGSILTHEHYQGGRHTFPMEVAGIKEKVSFDGYSDVEAGIVNWPMSVLRLRSEDKGRLIALATKILNCWRGYSDEKAGVLAESDGQPHHTITPIARRKDGKFELDLVLRDNQTSEEYPDGIYHPHKDVQHIKKENIGLIEVMGLAILPPRLKTELKDVEDYLLGQGNQVAPIHQEWADELKAQNPNITAEEVTEVVRQSVADIFARVLEDAGVYKTNSEGLAQFKAFVDFVNLAD.

This sequence belongs to the galactose-1-phosphate uridylyltransferase type 2 family.

The protein resides in the cytoplasm. The catalysed reaction is alpha-D-galactose 1-phosphate + UDP-alpha-D-glucose = alpha-D-glucose 1-phosphate + UDP-alpha-D-galactose. It participates in carbohydrate metabolism; galactose metabolism. This is Galactose-1-phosphate uridylyltransferase (galT) from Streptococcus thermophilus.